The primary structure comprises 126 residues: DNA-directed RNA polymerase 35 kDa subunit (126 aa).

The protein belongs to the poxviridae DNA-directed RNA polymerase 35 kDa subunit family. In terms of assembly, the DNA-dependent RNA polymerase used for intermediate and late genes expression consists of eight subunits 147 kDa, 133 kDa, 35 kDa, 30 kDa, 22 kDa, 19 kDa, 18 kDa and 7 kDa totalling more than 500 kDa in mass. The same holoenzyme, with the addition of the transcription-specificity factor RAP94, is used for early gene expression.

The protein resides in the virion. It carries out the reaction RNA(n) + a ribonucleoside 5'-triphosphate = RNA(n+1) + diphosphate. In terms of biological role, part of the DNA-dependent RNA polymerase which catalyzes the transcription of viral DNA into RNA using the four ribonucleoside triphosphates as substrates. Responsible for the transcription of early, intermediate and late genes. DNA-dependent RNA polymerase associates with the early transcription factor (ETF) thereby allowing the early genes transcription. Late transcription, and probably also intermediate transcription, require newly synthesized RNA polymerase. The polypeptide is DNA-directed RNA polymerase 35 kDa subunit (RPO35) (Ovis aries (Sheep)).